Reading from the N-terminus, the 527-residue chain is DUF21 domain-containing protein At1g47330 (527 aa).

At 1 to 15 the chain is on the extracellular side; that stretch reads MSSDIPCCGTTFSLY. The region spanning 8-191 is the CNNM transmembrane domain; that stretch reads CGTTFSLYVV…GKGGDLTTDE (184 aa). The helical transmembrane segment at 16-36 threads the bilayer; sequence VVIIIALVAFAGLMAGLTLGL. Over 37–70 the chain is Cytoplasmic; sequence MSLGLVDLEVLIKSGRPQDRINAGKIFPVVKNQH. A helical transmembrane segment spans residues 71–91; that stretch reads LLLCTLLIGNSMAMEALPIFL. The Extracellular segment spans residues 92 to 93; sequence DK. A helical transmembrane segment spans residues 94–114; it reads IVPPWLAILLSVTLILVFGEI. Residues 115–126 lie on the Cytoplasmic side of the membrane; sequence MPQAVCTRYGLK. A helical membrane pass occupies residues 127–147; the sequence is VGAIMAPFVRVLLVLFFPISY. At 148 to 527 the chain is on the extracellular side; the sequence is PISKVLDWML…PKHEESTQTL (380 aa). 3 CBS domains span residues 210–271, 274–334, and 366–435; these read MTPI…EVPL, MSMR…TKDE, and KSEN…ILDE. 3 disordered regions span residues 307-335, 358-384, and 464-527; these read KDLD…KDEL, ETGD…LLAA, and ITQS…TQTL. Ser-315 bears the Phosphoserine mark. Positions 358–369 are enriched in basic and acidic residues; it reads ETGDAKSGKSEN. Residues 464 to 501 are compositionally biased toward low complexity; sequence ITQSSSGSTSPNQTSHMATPDSSPTTKPSNSSPTRKPS. N-linked (GlcNAc...) asparagine glycosylation occurs at Asn-475. Residues 502–515 show a composition bias toward polar residues; it reads VSSPTREPSDSSHS. Basic and acidic residues predominate over residues 518–527; that stretch reads PKHEESTQTL.

The protein resides in the membrane. This is DUF21 domain-containing protein At1g47330 (CBSDUF7) from Arabidopsis thaliana (Mouse-ear cress).